Here is a 308-residue protein sequence, read N- to C-terminus: Olfactory receptor 2D2 (308 aa).

Topologically, residues 1–25 (MRQINQTQVTEFLLLGLSDGPHTEQ) are extracellular. Asn5 carries N-linked (GlcNAc...) asparagine glycosylation. The chain crosses the membrane as a helical span at residues 26 to 49 (LLFIVLLGVYLVTVLGNLLLISLV). The Cytoplasmic segment spans residues 50–57 (HVDSQLHT). The chain crosses the membrane as a helical span at residues 58–79 (PMYFFLCNLSLADLCFSTNIVP). Over 80-100 (QALVHLLSRKKVIAFTLCAAR) the chain is Extracellular. Residues 101-120 (LLFFLIFGCTQCALLAVMSY) form a helical membrane-spanning segment. Residues 121–139 (DRYVAICNPLRYPNIMTWK) are Cytoplasmic-facing. The chain crosses the membrane as a helical span at residues 140–158 (VCVQLATGSWTSGILVSVV). At 159 to 195 (DTTFILRLPYRGSNSIAHFFCEAPALLILASTDTHAS) the chain is on the extracellular side. Residues 196-219 (EMAIFLMGVVILLIPVFLILVSYG) form a helical membrane-spanning segment. The Cytoplasmic segment spans residues 220–236 (RIIVTVVKMKSTVGSLK). A helical membrane pass occupies residues 237–259 (AFSTCGSHLMVVILFYGSAIITY). The Extracellular portion of the chain corresponds to 260–270 (MTPKSSKQQEK). A helical membrane pass occupies residues 271–290 (SVSVFYAIVTPMLNPLIYSL). The Cytoplasmic segment spans residues 291 to 308 (RNKDVKAALRKVATRNFP).

Belongs to the G-protein coupled receptor 1 family.

It localises to the cell membrane. Odorant receptor. The sequence is that of Olfactory receptor 2D2 (OR2D2) from Homo sapiens (Human).